Reading from the N-terminus, the 957-residue chain is SH3 domain-binding protein 4-B (957 aa).

In terms of domain architecture, SH3 1 spans 54 to 113 (ENVKEVVAIKDYCPNNFTTLKFSKGEHLYVLDASGGDWWYAHNTTEMGYIPSSYVQPLNY). One can recognise a ZU5 domain in the interval 312–449 (TSIVCRLDSS…LEPVMYVVMV (138 aa)). Positions 649–719 (TSLKYGKLIK…HAKNVLVVGK (71 aa)) constitute an SH3 2 domain.

Homodimer or homooligomer.

The protein resides in the membrane. The protein localises to the clathrin-coated pit. Its subcellular location is the cytoplasmic vesicle. It localises to the clathrin-coated vesicle. It is found in the nucleus. Possible role in regulating endocytosis of the transferrin receptor at the plasma membrane. Alternatively, may function as a negative regulator of the amino acid-induced TOR signaling by inhibiting the formation of active Rag GTPase complexes. Preferentially binds inactive Rag GTPase complexes and prevents their interaction with the mTORC1 complex inhibiting its relocalization to lysosomes and its activation. Thereby, may indirectly regulate cell growth, proliferation and autophagy. The protein is SH3 domain-binding protein 4-B (sh3bp4-b) of Xenopus laevis (African clawed frog).